The following is a 433-amino-acid chain: Ascus wall endo-1,3-alpha-glucanase (433 aa).

It belongs to the glycosyl hydrolase 71 family.

It is found in the ascus epiplasm. It carries out the reaction Endohydrolysis of (1-&gt;3)-alpha-D-glucosidic linkages in isolichenin, pseudonigeran and nigeran.. Promotes the release of ascospores from asci by hydrolyzing 1,3-alpha-glucan in the ascus wall. This is Ascus wall endo-1,3-alpha-glucanase from Schizosaccharomyces pombe (strain 972 / ATCC 24843) (Fission yeast).